Here is a 216-residue protein sequence, read N- to C-terminus: Endoplasmic reticulum vesicle protein 25 (216 aa).

Residues 1 to 20 (MASLKSLLSGFLLLAGAAQA) form the signal peptide. Topologically, residues 21–185 (LKFDLEATSS…TNESTNNRVK (165 aa)) are lumenal. The region spanning 36–126 (RRCIRNFVNK…RRHVELDIDI (91 aa)) is the GOLD domain. The chain crosses the membrane as a helical span at residues 186–206 (WFGMATTFLLIALWGWQIMYL). Topologically, residues 207–216 (RAYFRSKHLI) are cytoplasmic.

This sequence belongs to the EMP24/GP25L family.

The protein localises to the endoplasmic reticulum membrane. The protein resides in the golgi apparatus membrane. Constituent of COPII-coated endoplasmic reticulum-derived transport vesicles. Required for efficient transport of a subset of secretory proteins to the Golgi. Facilitates retrograde transport from the Golgi to the endoplasmic reticulum. This Neurospora crassa (strain ATCC 24698 / 74-OR23-1A / CBS 708.71 / DSM 1257 / FGSC 987) protein is Endoplasmic reticulum vesicle protein 25 (erv-1).